A 1761-amino-acid polypeptide reads, in one-letter code: Probable serine/threonine-protein kinase DDB_G0282963 (1761 aa).

Disordered regions lie at residues 18-47 (PQQQQIPQQQEQQQQQQQQQQQQQQQQQQQ), 60-269 (QQQQ…SNKL), 322-458 (SISN…SDFN), 545-717 (QNSS…KSSQ), 749-783 (LKNSPFPPSSPILSPQTDDPNNNNNNNNSNTTISQ), 798-830 (AFYNSGSNNNNNNNNNNNNNNNNNNNNTNSTSA), 842-956 (TTQI…KSVF), 972-997 (NSHHHHNSGNNSSNSNNNNNDDEVPT), 1081-1151 (ITSA…CNVN), 1179-1305 (KNNC…PSKQ), 1318-1343 (ALDSTNNNNNNNNDTDSTSSNMGTPT), and 1355-1459 (QHSR…ECWK). Low complexity-rich tracts occupy residues 19 to 47 (QQQQIPQQQEQQQQQQQQQQQQQQQQQQQ), 60 to 85 (QQQQEQQNNNNNINDNINGNNNSNEI), 92 to 105 (NITNNNGTSIIISL), and 112 to 237 (ALNS…NNNN). Residues 238–256 (KQMTPPTFKNNLQVKHQPQ) are compositionally biased toward polar residues. Low complexity-rich tracts occupy residues 257–269 (SSSGGSIGGSNKL), 322–341 (SISNTTNETTTTTTTTTNTT), 348–451 (GSIG…NNGV), and 546–572 (NSSLNINNNNNSSNNNNINNNNNNNNI). Polar residues predominate over residues 573–582 (MAGSTSSVIY). Low complexity predominate over residues 591–627 (NENNNNNINNDNTVCNINNNNNSNNNKSNNSNNSNNS). Residues 633 to 643 (SSDEEPETDSD) show a composition bias toward acidic residues. 8 stretches are compositionally biased toward low complexity: residues 674 to 697 (NNTNTNTNTHNTYNNNKNNNNNNT), 759 to 778 (PILSPQTDDPNNNNNNNNSN), 805 to 824 (NNNNNNNNNNNNNNNNNNNN), 847 to 885 (TSDIDTSNSDNNNNNNNNNTSDNNFNDYNNDYNNDYNNY), 902 to 956 (TKMS…KSVF), 979 to 990 (SGNNSSNSNNNN), 1081 to 1149 (ITSA…CTCN), and 1180 to 1262 (NNCT…SNNN). Over residues 1263–1273 (NHHHHHHHHHN) the composition is skewed to basic residues. Low complexity-rich tracts occupy residues 1288–1303 (SSSSSPWSSPALSSPS), 1320–1338 (DSTNNNNNNNNDTDSTSSN), 1359–1386 (NNSSNNQNNNNINNNNNNNNNNNNNNNN), and 1393–1454 (SNST…MNSN). Residues 1476 to 1744 (LFLIKKIGAG…AITSLYDDYI (269 aa)) form the Protein kinase domain. Residues 1482 to 1490 (IGAGSFSKV) and K1503 contribute to the ATP site. The active-site Proton acceptor is the D1597.

This sequence belongs to the protein kinase superfamily. TKL Ser/Thr protein kinase family.

It carries out the reaction L-seryl-[protein] + ATP = O-phospho-L-seryl-[protein] + ADP + H(+). The enzyme catalyses L-threonyl-[protein] + ATP = O-phospho-L-threonyl-[protein] + ADP + H(+). This Dictyostelium discoideum (Social amoeba) protein is Probable serine/threonine-protein kinase DDB_G0282963.